The following is a 149-amino-acid chain: Large ribosomal subunit protein uL22c (149 aa).

This sequence belongs to the universal ribosomal protein uL22 family. Part of the 50S ribosomal subunit.

The protein localises to the plastid. It is found in the chloroplast. Its function is as follows. This protein binds specifically to 23S rRNA. Functionally, the globular domain of the protein is located near the polypeptide exit tunnel on the outside of the subunit, while an extended beta-hairpin is found that lines the wall of the exit tunnel in the center of the 70S ribosome. The sequence is that of Large ribosomal subunit protein uL22c (rpl22) from Oryza nivara (Indian wild rice).